A 213-amino-acid chain; its full sequence is Kiwellin (213 aa).

A signal peptide spans 1–24 (MAQLSLLVLSLFLTLISLPPPGAS). 3 cysteine pairs are disulfide-bonded: C28–C60, C32–C44, and C38–C49. P65 and P67 each carry 4-hydroxyproline. 4 disulfide bridges follow: C72-C90, C80-C172, C119-C144, and C166-C182. Residues 91–121 (SPPVTSSTPAKLTNNDFSEGGDGGGPSECDE) are disordered. Over residues 93-107 (PVTSSTPAKLTNNDF) the composition is skewed to polar residues.

This sequence belongs to the kiwellin family. Undergoes proteolytic cleavage by actinidin to produce kissper and KiTH. Three forms of KiTH are produced by cleavage at different sites.

The protein resides in the secreted. In terms of biological role, kissper is an anion-selective pore-forming peptide. The chain is Kiwellin from Actinidia chinensis var. chinensis (Chinese soft-hair kiwi).